We begin with the raw amino-acid sequence, 81 residues long: MNPLVFAASVIAAGLAVGLASIGPGVGQGTAAGQAVEGIARQPEAEGKIRGTLLLSLAFMEALTIYGLVVALALLFANPFV.

2 helical membrane passes run 3 to 23 (PLVF…ASIG) and 57 to 77 (LAFM…LLFA).

Belongs to the ATPase C chain family. As to quaternary structure, F-type ATPases have 2 components, F(1) - the catalytic core - and F(0) - the membrane proton channel. F(1) has five subunits: alpha(3), beta(3), gamma(1), delta(1), epsilon(1). F(0) has four main subunits: a(1), b(1), b'(1) and c(10-14). The alpha and beta chains form an alternating ring which encloses part of the gamma chain. F(1) is attached to F(0) by a central stalk formed by the gamma and epsilon chains, while a peripheral stalk is formed by the delta, b and b' chains.

The protein localises to the plastid. It is found in the chloroplast thylakoid membrane. F(1)F(0) ATP synthase produces ATP from ADP in the presence of a proton or sodium gradient. F-type ATPases consist of two structural domains, F(1) containing the extramembraneous catalytic core and F(0) containing the membrane proton channel, linked together by a central stalk and a peripheral stalk. During catalysis, ATP synthesis in the catalytic domain of F(1) is coupled via a rotary mechanism of the central stalk subunits to proton translocation. In terms of biological role, key component of the F(0) channel; it plays a direct role in translocation across the membrane. A homomeric c-ring of between 10-14 subunits forms the central stalk rotor element with the F(1) delta and epsilon subunits. In Atropa belladonna (Belladonna), this protein is ATP synthase subunit c, chloroplastic.